Consider the following 489-residue polypeptide: Dihydropyrimidinase 1 (489 aa).

Residues H61, H63, and K156 each coordinate Zn(2+). K156 is modified (N6-carboxylysine). A substrate-binding site is contributed by Y161. 2 residues coordinate Zn(2+): H189 and H245. S295 is a substrate binding site. Residue D323 coordinates Zn(2+). N344 contacts substrate.

The protein belongs to the metallo-dependent hydrolases superfamily. Hydantoinase/dihydropyrimidinase family. As to quaternary structure, homotetramer. It depends on Zn(2+) as a cofactor. In terms of processing, carboxylation allows a single lysine to coordinate two zinc ions.

The protein resides in the nucleus. It carries out the reaction 5,6-dihydrouracil + H2O = 3-(carbamoylamino)propanoate + H(+). The chain is Dihydropyrimidinase 1 (dhp-1) from Caenorhabditis briggsae.